A 292-amino-acid chain; its full sequence is MKGTIIKGIGGFYYIKIDNSEEIIECKARGKFRHTELTPMIGDYVEISVDKNNKGAIEKIYERRSELFRPAVANVTQALVVFSFKNPDINIDLLNKFLLLCEYNNLKAIVCFNKMDLVNKEDYKDIISMIEQAGYDIIFLNAKEERNMDIIKKLIKDNVTVFCGPSGVGKSTMLNKIIGKETMITGNISEKLKRGKHTTRHSELIYVDEGLLVDTPGFSSLDINFMEKEDLLHCIPEFRDFIGECKFTGCLHHREPNCAVKKAVEEGHIHKNRYDFYIKTLEEFMNRRKKKW.

Residues 64–221 (RSELFRPAVA…LVDTPGFSSL (158 aa)) enclose the CP-type G domain. Residues 113–116 (NKMD) and 164–172 (GPSGVGKST) contribute to the GTP site. Cys245, Cys250, His252, and Cys258 together coordinate Zn(2+).

The protein belongs to the TRAFAC class YlqF/YawG GTPase family. RsgA subfamily. As to quaternary structure, monomer. Associates with 30S ribosomal subunit, binds 16S rRNA. The cofactor is Zn(2+).

Its subcellular location is the cytoplasm. In terms of biological role, one of several proteins that assist in the late maturation steps of the functional core of the 30S ribosomal subunit. Helps release RbfA from mature subunits. May play a role in the assembly of ribosomal proteins into the subunit. Circularly permuted GTPase that catalyzes slow GTP hydrolysis, GTPase activity is stimulated by the 30S ribosomal subunit. The polypeptide is Small ribosomal subunit biogenesis GTPase RsgA (Clostridium botulinum (strain Loch Maree / Type A3)).